Consider the following 271-residue polypeptide: Probable diacyglycerol O-acyltransferase tgs3 (271 aa).

This sequence belongs to the long-chain O-acyltransferase family.

The enzyme catalyses an acyl-CoA + a 1,2-diacyl-sn-glycerol = a triacyl-sn-glycerol + CoA. Its pathway is glycerolipid metabolism; triacylglycerol biosynthesis. In terms of biological role, catalyzes the terminal and only committed step in triacylglycerol synthesis by using diacylglycerol and fatty acyl CoA as substrates. Required for storage lipid synthesis. This is Probable diacyglycerol O-acyltransferase tgs3 (tgs3) from Mycobacterium tuberculosis (strain CDC 1551 / Oshkosh).